Consider the following 959-residue polypeptide: Glycine dehydrogenase (decarboxylating) (959 aa).

Lysine 704 bears the N6-(pyridoxal phosphate)lysine mark.

This sequence belongs to the GcvP family. As to quaternary structure, the glycine cleavage system is composed of four proteins: P, T, L and H. It depends on pyridoxal 5'-phosphate as a cofactor.

The catalysed reaction is N(6)-[(R)-lipoyl]-L-lysyl-[glycine-cleavage complex H protein] + glycine + H(+) = N(6)-[(R)-S(8)-aminomethyldihydrolipoyl]-L-lysyl-[glycine-cleavage complex H protein] + CO2. The glycine cleavage system catalyzes the degradation of glycine. The P protein binds the alpha-amino group of glycine through its pyridoxal phosphate cofactor; CO(2) is released and the remaining methylamine moiety is then transferred to the lipoamide cofactor of the H protein. In Parasynechococcus marenigrum (strain WH8102), this protein is Glycine dehydrogenase (decarboxylating).